The following is a 60-amino-acid chain: Large ribosomal subunit protein bL32 (60 aa).

It belongs to the bacterial ribosomal protein bL32 family.

This is Large ribosomal subunit protein bL32 from Clostridium perfringens (strain ATCC 13124 / DSM 756 / JCM 1290 / NCIMB 6125 / NCTC 8237 / Type A).